A 470-amino-acid chain; its full sequence is UDP-glycosyltransferase 91A1 (470 aa).

UDP-alpha-D-glucose-binding positions include Ser290, 350–352, 367–375, and 389–392; these read VEQ, HPGWGTIIE, and VYDQ.

It belongs to the UDP-glycosyltransferase family.

The sequence is that of UDP-glycosyltransferase 91A1 (UGT91A1) from Arabidopsis thaliana (Mouse-ear cress).